The following is a 135-amino-acid chain: Methylglyoxal synthase (135 aa).

The region spanning 1-135 (MPKRRRIALI…AQPDPKEIHA (135 aa)) is the MGS-like domain. Residues H12, K16, 38–41 (TGTT), and 58–59 (SG) contribute to the substrate site. Residue D64 is the Proton donor/acceptor of the active site. Residue H91 participates in substrate binding.

It belongs to the methylglyoxal synthase family.

The enzyme catalyses dihydroxyacetone phosphate = methylglyoxal + phosphate. Its function is as follows. Catalyzes the formation of methylglyoxal from dihydroxyacetone phosphate. The chain is Methylglyoxal synthase from Ralstonia nicotianae (strain ATCC BAA-1114 / GMI1000) (Ralstonia solanacearum).